The chain runs to 163 residues: Probable ribosome biogenesis protein RLP24 (163 aa).

It belongs to the eukaryotic ribosomal protein eL24 family. As to quaternary structure, associated with nucleolar and cytoplasmic pre-60S particles. At the end of biogenesis it dissociates from cytoplasmic pre-60S particles and is likely to be exchanged for its ribosomal homolog, RPL24.

It is found in the nucleus. The protein localises to the nucleolus. In terms of biological role, involved in the biogenesis of the 60S ribosomal subunit. Ensures the docking of GTPBP4/NOG1 to pre-60S particles. In Homo sapiens (Human), this protein is Probable ribosome biogenesis protein RLP24 (RSL24D1).